We begin with the raw amino-acid sequence, 92 residues long: Alpha-defensin 25 (92 aa).

A signal peptide spans 1–19; that stretch reads MKTLVLLSALALLAFQVQA. Residues 20 to 57 constitute a propeptide that is removed on maturation; that stretch reads DPIQNRDEESKIDEQPGKEDQAVSVSFGDPEGSSLQEE. Positions 24 to 40 are enriched in basic and acidic residues; sequence NRDEESKIDEQPGKEDQ. The tract at residues 24-53 is disordered; it reads NRDEESKIDEQPGKEDQAVSVSFGDPEGSS. Disulfide bonds link cysteine 63/cysteine 92, cysteine 65/cysteine 80, and cysteine 70/cysteine 91.

The protein belongs to the alpha-defensin family.

It is found in the secreted. Its function is as follows. May have microbicidal activities. The polypeptide is Alpha-defensin 25 (Defa25) (Mus musculus (Mouse)).